A 147-amino-acid chain; its full sequence is Sulfur acceptor protein CsdE (147 aa).

The active-site Cysteine persulfide intermediate is the Cys61. Cys61 is subject to Cysteine persulfide.

The protein belongs to the SufE family. In terms of assembly, homodimer. Forms a heterodimer with CsdA. Interacts with CsdA and with TcdA/CsdL.

Stimulates the cysteine desulfurase activity of CsdA. Contains a cysteine residue (Cys-61) that acts to accept sulfur liberated via the desulfurase activity of CsdA. May be able to transfer sulfur to TcdA/CsdL. Seems to support the function of TcdA in the generation of cyclic threonylcarbamoyladenosine at position 37 (ct(6)A37) in tRNAs that read codons beginning with adenine. Does not appear to participate in Fe/S biogenesis. The chain is Sulfur acceptor protein CsdE (csdE) from Escherichia coli (strain K12).